A 154-amino-acid chain; its full sequence is Protein X (154 aa).

A mitochondrial targeting sequence region spans residues 68-117 (PCALRFTSARRMETTVNAHRNLPKVLHKRTLGLSAMSTTDLEAYFKDCVF).

Belongs to the orthohepadnavirus protein X family. As to quaternary structure, may form homodimer. May interact with host CEBPA, CFLAR, CREB1, DDB1, E4F1, HBXIP, HSPD1/HSP60, NFKBIA, POLR2E and SMAD4. Interacts with host SMC5-SMC6 complex and induces its degradation. Interacts with host TRPC4AP; leading to prevent ubiquitination of TRPC4AP. Interacts with host PLSCR1; this interaction promotes ubiquitination and degradation of HBx and impairs HBx-mediated cell proliferation. Post-translationally, a fraction may be phosphorylated in insect cells and HepG2 cells, a human hepatoblastoma cell line. Phosphorylated in vitro by host protein kinase C or mitogen-activated protein kinase. N-acetylated in insect cells.

The protein localises to the host cytoplasm. It localises to the host nucleus. It is found in the host mitochondrion. Its function is as follows. Multifunctional protein that plays a role in silencing host antiviral defenses and promoting viral transcription. Does not seem to be essential for HBV infection. May be directly involved in development of cirrhosis and liver cancer (hepatocellular carcinoma). Most of cytosolic activities involve modulation of cytosolic calcium. The effect on apoptosis is controversial depending on the cell types in which the studies have been conducted. May induce apoptosis by localizing in mitochondria and causing loss of mitochondrial membrane potential. May also modulate apoptosis by binding host CFLAR, a key regulator of the death-inducing signaling complex (DISC). Promotes viral transcription by using the host E3 ubiquitin ligase DDB1 to target the SMC5-SMC6 complex to proteasomal degradation. This host complex would otherwise bind to viral episomal DNA, and prevents its transcription. Moderately stimulates transcription of many different viral and cellular transcription elements. Promoters and enhancers stimulated by HBx contain DNA binding sites for NF-kappa-B, AP-1, AP-2, c-EBP, ATF/CREB, or the calcium-activated factor NF-AT. The sequence is that of Protein X from Hepatitis B virus genotype B1 subtype adw (isolate Japan/pJDW233/1988) (HBV-B).